Reading from the N-terminus, the 607-residue chain is MRAVRRGLREGGAMAAARDPPEVSLREATQRKLRRFSELRGKLVARGEFWDIVAITAADEKQELAYNQQLSEKLKRKELPLGVQYHVFVDPAGAKIGNGGSTLCALQCLEKLYGDKWNSFTILLIHSGGYSQRLPNASALGKIFTALPLGNPIYQMLELKLAMYIDFPLNMNPGILVTCADDIELYSIGEFEFIRFDKPGFTALAHPSSLTIGTTHGVFVLDPFDDLKHRDLEYRSCHRFLHKPSIEKMYQFNAVCRPGNFCQQDFAGGDIADLKLDSDYVYTDSLFYMDHKSAKMLLAFYEKIGTLSCEIDAYGDFLQALGPGATVEYTRNTSNVIKEESELVEMRQRIFHLLKGTSLNVVVLNNSKFYHIGTTEEYLFYFTSDNSLKSELGLQSITFSIFPDIPECSGKTSCIIQSILDSRCSVAPGSVVEYSRLGPDVSVGENCIISGSYILTKAALPAHSFVCSLSLKMNRCLKYATMAFGVQDNLKKSVKTLSDIKLLQFFGVCFLSCLDVWNLKVTEELFSGNKTCLSLWTARIFPVCSSLSDSVITSLKMLNAVKNKSAFSLNSYKLLSIEEMLIYKDVEDMITYREQIFLEISLKSSLM.

The disordered stretch occupies residues 1-21 (MRAVRRGLREGGAMAAARDPP).

As to expression, expressed in many tissues.

Its subcellular location is the cytoplasm. It carries out the reaction beta-L-fucose 1-phosphate + GTP + H(+) = GDP-beta-L-fucose + diphosphate. Its function is as follows. Catalyzes the formation of GDP-L-fucose from GTP and L-fucose-1-phosphate. Functions as a salvage pathway to reutilize L-fucose arising from the turnover of glycoproteins and glycolipids. The sequence is that of Fucose-1-phosphate guanylyltransferase from Homo sapiens (Human).